The sequence spans 470 residues: ATP synthase subunit beta 2 (470 aa).

155–162 (GGAGVGKT) contacts ATP.

The protein belongs to the ATPase alpha/beta chains family. F-type ATPases have 2 components, CF(1) - the catalytic core - and CF(0) - the membrane proton channel. CF(1) has five subunits: alpha(3), beta(3), gamma(1), delta(1), epsilon(1). CF(0) has three main subunits: a(1), b(2) and c(9-12). The alpha and beta chains form an alternating ring which encloses part of the gamma chain. CF(1) is attached to CF(0) by a central stalk formed by the gamma and epsilon chains, while a peripheral stalk is formed by the delta and b chains.

Its subcellular location is the cell inner membrane. It catalyses the reaction ATP + H2O + 4 H(+)(in) = ADP + phosphate + 5 H(+)(out). Functionally, produces ATP from ADP in the presence of a proton gradient across the membrane. The catalytic sites are hosted primarily by the beta subunits. The sequence is that of ATP synthase subunit beta 2 from Nitrosospira multiformis (strain ATCC 25196 / NCIMB 11849 / C 71).